Here is a 273-residue protein sequence, read N- to C-terminus: Large ribosomal subunit protein uL2 (273 aa).

The interval Arg221 to Lys273 is disordered. Basic residues predominate over residues Lys253 to Lys273.

This sequence belongs to the universal ribosomal protein uL2 family. As to quaternary structure, part of the 50S ribosomal subunit. Forms a bridge to the 30S subunit in the 70S ribosome.

In terms of biological role, one of the primary rRNA binding proteins. Required for association of the 30S and 50S subunits to form the 70S ribosome, for tRNA binding and peptide bond formation. It has been suggested to have peptidyltransferase activity; this is somewhat controversial. Makes several contacts with the 16S rRNA in the 70S ribosome. This chain is Large ribosomal subunit protein uL2, found in Mannheimia succiniciproducens (strain KCTC 0769BP / MBEL55E).